Here is a 156-residue protein sequence, read N- to C-terminus: Small ribosomal subunit protein uS7 (156 aa).

Belongs to the universal ribosomal protein uS7 family. As to quaternary structure, part of the 30S ribosomal subunit. Contacts proteins S9 and S11.

Functionally, one of the primary rRNA binding proteins, it binds directly to 16S rRNA where it nucleates assembly of the head domain of the 30S subunit. Is located at the subunit interface close to the decoding center, probably blocks exit of the E-site tRNA. The polypeptide is Small ribosomal subunit protein uS7 (Deinococcus radiodurans (strain ATCC 13939 / DSM 20539 / JCM 16871 / CCUG 27074 / LMG 4051 / NBRC 15346 / NCIMB 9279 / VKM B-1422 / R1)).